A 461-amino-acid polypeptide reads, in one-letter code: Cysteine--tRNA ligase (461 aa).

Zn(2+) is bound at residue C28. The 'HIGH' region signature appears at I30–H40. The Zn(2+) site is built by C209, H234, and E238. The 'KMSKS' region signature appears at K266 to S270. K269 contributes to the ATP binding site.

It belongs to the class-I aminoacyl-tRNA synthetase family. As to quaternary structure, monomer. Zn(2+) serves as cofactor.

The protein resides in the cytoplasm. It catalyses the reaction tRNA(Cys) + L-cysteine + ATP = L-cysteinyl-tRNA(Cys) + AMP + diphosphate. This is Cysteine--tRNA ligase from Enterobacter sp. (strain 638).